The primary structure comprises 525 residues: Ribosomal protein S6 kinase beta-1 (525 aa).

Residues 28 to 32 (FDIDL) carry the TOS motif motif. Residues 32–46 (LDQPEDAGSEDELEE) show a composition bias toward acidic residues. The segment at 32 to 54 (LDQPEDAGSEDELEEGGQLNESM) is disordered. The region spanning 91 to 352 (FELLRVLGKG…AGEVQAHPFF (262 aa)) is the Protein kinase domain. ATP-binding positions include 97–105 (LGKGGYGKV) and K123. The active-site Proton acceptor is the D218. Phosphothreonine; by PDPK1 is present on T252. The region spanning 353–423 (RHINWEELLA…VAPSVLESVK (71 aa)) is the AGC-kinase C-terminal domain. The tract at residues 380–399 (SQFDSKFTRQTPVDSPDDST) is disordered. A compositionally biased stretch (polar residues) spans 381 to 399 (QFDSKFTRQTPVDSPDDST). Residue S394 is modified to Phosphoserine. T412 carries the phosphothreonine; by MTOR, NEK6 and NEK7 modification. The autoinhibitory domain stretch occupies residues 424–525 (EKFSFEPKIR…KRPEHLRMNL (102 aa)). 2 positions are modified to phosphoserine: S434 and S441. Residue T444 is modified to Phosphothreonine. A phosphoserine mark is found at S447 and S452. Residue K516 is modified to N6-acetyllysine.

The protein belongs to the protein kinase superfamily. AGC Ser/Thr protein kinase family. S6 kinase subfamily. As to quaternary structure, interacts with PPP1R9A/neurabin-1. Interacts with RPTOR. Interacts with IRS1. Interacts with EIF3B and EIF3C. Interacts with TRAF4. Interacts with POLDIP3. Interacts (via N-terminus) with IER5. Post-translationally, phosphorylation at Thr-412 is regulated by mTORC1. The phosphorylation at this site is maintained by an agonist-dependent autophosphorylation mechanism. Activated by phosphorylation at Thr-252 by PDPK1. Dephosphorylation by PPP1CC at Thr-412 in mitochondrion.

It localises to the cytoplasm. Its subcellular location is the synapse. The protein localises to the synaptosome. The protein resides in the mitochondrion outer membrane. It is found in the mitochondrion. It catalyses the reaction L-seryl-[protein] + ATP = O-phospho-L-seryl-[protein] + ADP + H(+). It carries out the reaction L-threonyl-[protein] + ATP = O-phospho-L-threonyl-[protein] + ADP + H(+). Activation requires multiple phosphorylation events on serine/threonine residues. Activation appears to be first mediated by phosphorylation of multiple sites in the autoinhibitory domain, which facilitates phosphorylation at Thr-412, disrupting the autoinhibitory mechanism and allowing phosphorylation of Thr-252 by PDPK1. The active conformation of the kinase is believed to be stabilized by a mechanism involving three conserved phosphorylation sites located in the kinase domain activation loop (Thr-252) and in the AGC-kinase C-terminal domain (Ser-394 in the middle of the tail/linker region and Thr-412 within a hydrophobic motif at its end). Activated by mTORC1; isoform Alpha I and isoform Alpha II are sensitive to rapamycin, which inhibits activating phosphorylation at Thr-412. Activated by PDPK1. Its function is as follows. Serine/threonine-protein kinase that acts downstream of mTOR signaling in response to growth factors and nutrients to promote cell proliferation, cell growth and cell cycle progression. Regulates protein synthesis through phosphorylation of EIF4B, RPS6 and EEF2K, and contributes to cell survival by repressing the pro-apoptotic function of BAD. Under conditions of nutrient depletion, the inactive form associates with the EIF3 translation initiation complex. Upon mitogenic stimulation, phosphorylation by the mechanistic target of rapamycin complex 1 (mTORC1) leads to dissociation from the EIF3 complex and activation. The active form then phosphorylates and activates several substrates in the pre-initiation complex, including the EIF2B complex and the cap-binding complex component EIF4B. Also controls translation initiation by phosphorylating a negative regulator of EIF4A, PDCD4, targeting it for ubiquitination and subsequent proteolysis. Promotes initiation of the pioneer round of protein synthesis by phosphorylating POLDIP3/SKAR. In response to IGF1, activates translation elongation by phosphorylating EEF2 kinase (EEF2K), which leads to its inhibition and thus activation of EEF2. Also plays a role in feedback regulation of mTORC2 by mTORC1 by phosphorylating MAPKAP1/SIN1, MTOR and RICTOR, resulting in the inhibition of mTORC2 and AKT1 signaling. Also involved in feedback regulation of mTORC1 and mTORC2 by phosphorylating DEPTOR. Mediates cell survival by phosphorylating the pro-apoptotic protein BAD and suppressing its pro-apoptotic function. Phosphorylates mitochondrial URI1 leading to dissociation of a URI1-PPP1CC complex. The free mitochondrial PPP1CC can then dephosphorylate RPS6KB1 at Thr-412, which is proposed to be a negative feedback mechanism for the RPS6KB1 anti-apoptotic function. Mediates TNF-alpha-induced insulin resistance by phosphorylating IRS1 at multiple serine residues, resulting in accelerated degradation of IRS1. In cells lacking functional TSC1-2 complex, constitutively phosphorylates and inhibits GSK3B. May be involved in cytoskeletal rearrangement through binding to neurabin. Phosphorylates and activates the pyrimidine biosynthesis enzyme CAD, downstream of MTOR. Following activation by mTORC1, phosphorylates EPRS and thereby plays a key role in fatty acid uptake by adipocytes and also most probably in interferon-gamma-induced translation inhibition. The chain is Ribosomal protein S6 kinase beta-1 (Rps6kb1) from Mus musculus (Mouse).